We begin with the raw amino-acid sequence, 554 residues long: MSEAEARPTNFIRQIIDEDLASGKHTTVHTRFPPEPNGYLHIGHAKSICLNFGIAQDYKGQCNLRFDDTNPVKEDIEYVDSIKNDVEWLGFHWSGNVRYSSDYFDQLHAYAIELINKGLAYVDELTPEQIREYRGTLTKPGKNSPYRDRSVEENLPLFEKMRTGGFEEGKACLRAKIDMASPFIVMRDPVLYRIKFAEHHQTGNKWCIYPMYDFTHCISDALEGITHSLCTLEFQDNRRLYDWVLDNITIPVHPRQYEFSRLNLEYTVMSKRKLNLLVTDKHVEGWDDPRMPTISGLRRRGYTAASIREFCKRIGVTKQDNTIEMASLESCIREDLNENAPRAMAVIDPVKLVIENYQGEGEMVTMPNHPNKPEMGSRQVPFSGEIWIDRADFREEANKQYKRLVLGKEVRLRNAYVIKAERVEKDAEGNITTIFCTYDADTLSKDPADGRKVKGVIHWVSAAHALPVEIRLYDRLFSVPNPGAADDFLSVINPESLVIKQGFAEPSLKDAVAGKAFQFEREGYFCLDSRHSTAEKPVFNRTVGLRDTWAKVGE.

Positions 34–44 match the 'HIGH' region motif; sequence PEPNGYLHIGH. Residues 35–37 and 41–47 each bind ATP; these read EPN and HIGHAKS. Positions 67 and 212 each coordinate L-glutamine. ATP is bound by residues Thr231, 261-262, and 269-271; these read RL and MSK. The 'KMSKS' region signature appears at 268–272; that stretch reads VMSKR. Residues 317-324 are interaction with tRNA; that stretch reads TKQDNTIE.

It belongs to the class-I aminoacyl-tRNA synthetase family. As to quaternary structure, monomer.

It localises to the cytoplasm. It carries out the reaction tRNA(Gln) + L-glutamine + ATP = L-glutaminyl-tRNA(Gln) + AMP + diphosphate. The polypeptide is Glutamine--tRNA ligase (Shigella dysenteriae serotype 1 (strain Sd197)).